The sequence spans 338 residues: MTIRIAINGFGRIGRNVLRALYESGRRAEIKVVAINEPADAAGMAHLLKYDSTHGRFDWDVRQERDVLYVGDDAIRLLHQKEISQLPWGDLGVDIVLDCSGVYGKRADGEMHLASGAKKVLFSHPGSSDLDATVIYGVNHQQLQSEHRIVSSGSCTTNCIIPIIKLLDDAFSIESGTVTTIHASMNDQQVIDAYHPDLRRTRAASQSIIPVDTKLAAGITRIFPKFCDRFEAISVRVPTINVTAIDLSVTVTNAVSVLDVNTMLQRAAKGDFRSIVDYTELPLVSIDFNHDPHSAIVDGTQTRVSGKHLIKTLVWCDNEWGFANRMLDTTLMMARIGF.

An NAD(+)-binding site is contributed by 12 to 13 (RI). Residues 154-156 (SCT), Arg-200, 213-214 (TK), and Arg-236 each bind substrate. Cys-155 (nucleophile) is an active-site residue. Asn-318 is a binding site for NAD(+).

Belongs to the glyceraldehyde-3-phosphate dehydrogenase family. Epd subfamily. In terms of assembly, homotetramer.

It localises to the cytoplasm. It carries out the reaction D-erythrose 4-phosphate + NAD(+) + H2O = 4-phospho-D-erythronate + NADH + 2 H(+). It functions in the pathway cofactor biosynthesis; pyridoxine 5'-phosphate biosynthesis; pyridoxine 5'-phosphate from D-erythrose 4-phosphate: step 1/5. Catalyzes the NAD-dependent conversion of D-erythrose 4-phosphate to 4-phosphoerythronate. The protein is D-erythrose-4-phosphate dehydrogenase of Tolumonas auensis (strain DSM 9187 / NBRC 110442 / TA 4).